A 103-amino-acid chain; its full sequence is Small ribosomal subunit protein uS10 (103 aa).

It belongs to the universal ribosomal protein uS10 family. In terms of assembly, part of the 30S ribosomal subunit.

Functionally, involved in the binding of tRNA to the ribosomes. The protein is Small ribosomal subunit protein uS10 of Campylobacter hominis (strain ATCC BAA-381 / DSM 21671 / CCUG 45161 / LMG 19568 / NCTC 13146 / CH001A).